The chain runs to 274 residues: Dermonecrotic toxin LarSicTox-alphaIB2bii (274 aa).

The active site involves His-3. Residues Glu-23 and Asp-25 each coordinate Mg(2+). Catalysis depends on His-39, which acts as the Nucleophile. Disulfide bonds link Cys-43–Cys-49 and Cys-45–Cys-188. Asp-83 is a binding site for Mg(2+). Asn-251 carries N-linked (GlcNAc...) asparagine glycosylation.

The protein belongs to the arthropod phospholipase D family. Class II subfamily. Mg(2+) serves as cofactor. Expressed by the venom gland.

The protein localises to the secreted. The catalysed reaction is an N-(acyl)-sphingosylphosphocholine = an N-(acyl)-sphingosyl-1,3-cyclic phosphate + choline. It carries out the reaction an N-(acyl)-sphingosylphosphoethanolamine = an N-(acyl)-sphingosyl-1,3-cyclic phosphate + ethanolamine. The enzyme catalyses a 1-acyl-sn-glycero-3-phosphocholine = a 1-acyl-sn-glycero-2,3-cyclic phosphate + choline. It catalyses the reaction a 1-acyl-sn-glycero-3-phosphoethanolamine = a 1-acyl-sn-glycero-2,3-cyclic phosphate + ethanolamine. Dermonecrotic toxins cleave the phosphodiester linkage between the phosphate and headgroup of certain phospholipids (sphingolipid and lysolipid substrates), forming an alcohol (often choline) and a cyclic phosphate. This toxin acts on sphingomyelin (SM). It may also act on ceramide phosphoethanolamine (CPE), lysophosphatidylcholine (LPC) and lysophosphatidylethanolamine (LPE), but not on lysophosphatidylserine (LPS), and lysophosphatidylglycerol (LPG). It acts by transphosphatidylation, releasing exclusively cyclic phosphate products as second products. Induces dermonecrosis, hemolysis, increased vascular permeability, edema, inflammatory response, and platelet aggregation. In Loxosceles arizonica (Arizona brown spider), this protein is Dermonecrotic toxin LarSicTox-alphaIB2bii.